The sequence spans 75 residues: U6-lycotoxin-Ls1e (75 aa).

The N-terminal stretch at 1–21 is a signal peptide; it reads MKLLLFTALVLVVISLIEVEA. Residues 22–25 constitute a propeptide that is removed on maturation; it reads ENER.

This sequence belongs to the neurotoxin 19 (CSTX) family. 06 (U6-Lctx) subfamily. In terms of processing, contains 4 disulfide bonds. As to expression, expressed by the venom gland.

The protein localises to the secreted. This Lycosa singoriensis (Wolf spider) protein is U6-lycotoxin-Ls1e.